Here is a 460-residue protein sequence, read N- to C-terminus: uncharacterized protein (460 aa).

The 59-residue stretch at 6-64 (PVKKNNDYEIYIDDFGNMGEGIGKIDNFTVFVKDAVKGEKVRAKIIKVNKSFAIGKLID) folds into the TRAM domain. [4Fe-4S] cluster-binding residues include Cys77, Cys83, Cys86, and Cys166. S-adenosyl-L-methionine contacts are provided by Gln290, Tyr319, Glu340, and Asp388. Cys415 serves as the catalytic Nucleophile.

This sequence belongs to the class I-like SAM-binding methyltransferase superfamily. RNA M5U methyltransferase family.

This is an uncharacterized protein from Clostridium acetobutylicum (strain ATCC 824 / DSM 792 / JCM 1419 / IAM 19013 / LMG 5710 / NBRC 13948 / NRRL B-527 / VKM B-1787 / 2291 / W).